The chain runs to 744 residues: MAADKPADQGAEKHEGAGQSSGVTDQEKELSTSAFQAFTSGNYDACLQHLACLQDINKDDYKIILNTAVAEFFKNNQTTTDNLRQTLNQLKNQVHSAVEEMDGLDDVENSMLYYNQAVILYHLRQHTEAIAVGEKLYQFIEPFEEKFAQAVCFLLVDLYILTHQAEKALHLLAVLEKMISQGSGNKNGKSETGNNSSKDGSNPKAESAALIEAAKSKIHQYKVRGYIQMKSLKACKREIKSVMNTAGNSAPSLFLKSNFEYLRGNYRKAVKLLNSSNIAEHPGFMKTGECLRCMFWNNLGCIHFAMSKHNLGIFYFKKALQENDNVCAQLSAGNTDPGKKFSGRPMCTLLANKRYELLYNCGIQLLHVGRPLAAFECLVEAVQVYHANPRLWLRLAECCIAANKGTSEQETKGLPTKKGIVQSIVGQGYHRKIVLASQSIQNTVYNDGQSSAIPVASVEFAAICLRNALLLLPEEQQDPKQENGSKSSSQLGGNAESSESSETCSSKSHDGDKLIPAPPSSPLRKQELENLKCSILACSAYVALALGDNLMALNHADQLLQQPKLSGSLKFLGHLYAAEALISLDRISDAITHLNPENVTDVSLGISSNEQDQGSDKGENEAMESSGKRAPQCYPSSVNSARTVMLFNLGSAYCLRSEYDKARKCLHQAASMIHPKEVPPEAILLAVYLELQNGNTQLALQMIKRNQLLPAVKAHSDVRKKTVFQPVHPIQPIQMPAFTTVQRK.

Residues 1 to 16 (MAADKPADQGAEKHEG) are compositionally biased toward basic and acidic residues. 4 disordered regions span residues 1-26 (MAAD…VTDQ), 183-204 (SGNK…SNPK), 475-522 (EQQD…PSSP), and 602-632 (VSLG…RAPQ). The residue at position 2 (alanine 2) is an N-acetylalanine. A compositionally biased stretch (polar residues) spans 183 to 200 (SGNKNGKSETGNNSSKDG). The segment covering 496 to 506 (ESSESSETCSS) has biased composition (low complexity). A compositionally biased stretch (polar residues) spans 602–612 (VSLGISSNEQD).

Belongs to the CNOT10 family. In terms of assembly, component of the CCR4-NOT complex; distinct complexes seem to exist that differ in the participation of probably mutually exclusive catalytic subunits. CNOT10 and CNOT11 form a subcomplex docked to the CNOT1 scaffold.

It localises to the cytoplasm. The protein resides in the nucleus. Component of the CCR4-NOT complex which is one of the major cellular mRNA deadenylases and is linked to various cellular processes including bulk mRNA degradation, miRNA-mediated repression, translational repression during translational initiation and general transcription regulation. Additional complex functions may be a consequence of its influence on mRNA expression. Is not required for association of CNOT7 to the CCR4-NOT complex. The protein is CCR4-NOT transcription complex subunit 10 (Cnot10) of Rattus norvegicus (Rat).